Here is a 289-residue protein sequence, read N- to C-terminus: ATP synthase gamma chain (289 aa).

The protein belongs to the ATPase gamma chain family. F-type ATPases have 2 components, CF(1) - the catalytic core - and CF(0) - the membrane proton channel. CF(1) has five subunits: alpha(3), beta(3), gamma(1), delta(1), epsilon(1). CF(0) has three main subunits: a, b and c.

Its subcellular location is the cell inner membrane. Produces ATP from ADP in the presence of a proton gradient across the membrane. The gamma chain is believed to be important in regulating ATPase activity and the flow of protons through the CF(0) complex. This Histophilus somni (strain 129Pt) (Haemophilus somnus) protein is ATP synthase gamma chain.